A 479-amino-acid polypeptide reads, in one-letter code: MQTNIGLIGLAVMGKNLVLNMIDHGFSVSVYNRTPEKTRDFLKEYPNHRELVGFESLEDFVNSLERPRKIMLMIQAGKPVDQSIHALLPFLEPGDVIIDGGNSYFKDSERRCKELQEKGILFLGVGISGGEEGARHGPSIMPGGNPEAWPLVAPIFQSIAAKVQGRPCCSWVGTGGAGHYVKAVHNGIEYGDIQLICEAYGILRDFLKLSATAVATILKEWNTLELESYLIRIASEVLALKDPEGIPVIDTILDVVGQKGTGKWTAIDALNSGVPLSLIIGAVLARFLSSWKEIREQAARNYPGTPLIFEMPHDPSVFIQDVFHALYASKIISYAQGFMLLGEASKEYNWGLDLGEIALMWRGGCIIQSAFLDVIHKGFAANPENTSLIFQEYFRGALRHAEMGWRRTVVTAIGAGLPIPCLAAAITFYDGYRTASSSMSLAQGLRDYFGAHTYERNDRPRGEFYHTDWVHTKTTERVK.

NADP(+) contacts are provided by residues 9-14, 32-34, 74-76, and Asn102; these read GLAVMG, NRT, and IQA. Substrate contacts are provided by residues Asn102 and 128–130; that span reads SGG. Lys182 functions as the Proton acceptor in the catalytic mechanism. 185–186 serves as a coordination point for substrate; sequence HN. Glu189 (proton donor) is an active-site residue. 5 residues coordinate substrate: Tyr190, Lys259, Arg286, Arg446, and His452.

It belongs to the 6-phosphogluconate dehydrogenase family. Homodimer.

It carries out the reaction 6-phospho-D-gluconate + NADP(+) = D-ribulose 5-phosphate + CO2 + NADPH. It participates in carbohydrate degradation; pentose phosphate pathway; D-ribulose 5-phosphate from D-glucose 6-phosphate (oxidative stage): step 3/3. In terms of biological role, catalyzes the oxidative decarboxylation of 6-phosphogluconate to ribulose 5-phosphate and CO(2), with concomitant reduction of NADP to NADPH. The sequence is that of 6-phosphogluconate dehydrogenase, decarboxylating (gnd) from Chlamydia pneumoniae (Chlamydophila pneumoniae).